A 318-amino-acid polypeptide reads, in one-letter code: Pantothenate kinase (318 aa).

Residue 96–103 coordinates ATP; the sequence is GSVAVGKS.

It belongs to the prokaryotic pantothenate kinase family.

It is found in the cytoplasm. It carries out the reaction (R)-pantothenate + ATP = (R)-4'-phosphopantothenate + ADP + H(+). Its pathway is cofactor biosynthesis; coenzyme A biosynthesis; CoA from (R)-pantothenate: step 1/5. In Rhodopseudomonas palustris (strain BisB5), this protein is Pantothenate kinase.